Consider the following 237-residue polypeptide: MGRKWNNIKEKKASKDANTSRVYAKFGREIYVAARQGEPDPELNQSLKFVVERAKTYNVPRAIIDRAIDKAKGGDEENFDELRYEGFGPNGSMVIVDTLTNNVNRTASEVRAAFGKNGGNMGVSGSVAYMFDATAVIGVNEMSADDVLELMMEHDLDVRDVIEEDETVIVYAEPEAFHAVQTAFKAAGVEEFAVAELTMLPQNEVSLDDASQEQFEKLIDVLEDLEDVRQVYHNVEM.

Belongs to the TACO1 family. YeeN subfamily.

It localises to the cytoplasm. This is Probable transcriptional regulatory protein EAT1b_0153 from Exiguobacterium sp. (strain ATCC BAA-1283 / AT1b).